Consider the following 322-residue polypeptide: CPX chromosomal region candidate gene 1 protein homolog (322 aa).

2 stretches are compositionally biased toward polar residues: residues 1-23 (MTSS…NETP) and 37-78 (TNIS…TQND). The interval 1 to 83 (MTSSNQGNDP…MTQNDPPDEE (83 aa)) is disordered.

In Mus musculus (Mouse), this protein is CPX chromosomal region candidate gene 1 protein homolog (Cpxcr1).